The chain runs to 109 residues: Nucleoid-associated protein VS_0917 (109 aa).

Disordered stretches follow at residues 1 to 22 (MFGK…ERMQ) and 88 to 109 (QKEK…KMPF). The segment covering 9 to 18 (NMMKQAQQMQ) has biased composition (low complexity).

The protein belongs to the YbaB/EbfC family. In terms of assembly, homodimer.

It is found in the cytoplasm. Its subcellular location is the nucleoid. Binds to DNA and alters its conformation. May be involved in regulation of gene expression, nucleoid organization and DNA protection. The polypeptide is Nucleoid-associated protein VS_0917 (Vibrio atlanticus (strain LGP32) (Vibrio splendidus (strain Mel32))).